Reading from the N-terminus, the 63-residue chain is Large ribosomal subunit protein bL28 (63 aa).

This sequence belongs to the bacterial ribosomal protein bL28 family.

The sequence is that of Large ribosomal subunit protein bL28 from Clostridium perfringens (strain ATCC 13124 / DSM 756 / JCM 1290 / NCIMB 6125 / NCTC 8237 / Type A).